The sequence spans 347 residues: GMP reductase (347 aa).

108–131 (ADFEKTVQILALNPALNFVCIDVA) contacts NADP(+). Residues glycine 181 and glycine 183 each coordinate K(+). Cysteine 186 serves as the catalytic Thioimidate intermediate. An NADP(+)-binding site is contributed by 216-239 (IVSDGGCTMPGDVAKAFGGGADFV).

The protein belongs to the IMPDH/GMPR family. GuaC type 1 subfamily. In terms of assembly, homotetramer.

It catalyses the reaction IMP + NH4(+) + NADP(+) = GMP + NADPH + 2 H(+). Functionally, catalyzes the irreversible NADPH-dependent deamination of GMP to IMP. It functions in the conversion of nucleobase, nucleoside and nucleotide derivatives of G to A nucleotides, and in maintaining the intracellular balance of A and G nucleotides. The polypeptide is GMP reductase (Salmonella paratyphi A (strain ATCC 9150 / SARB42)).